Reading from the N-terminus, the 198-residue chain is Uracil phosphoribosyltransferase homolog (198 aa).

The protein belongs to the UPRTase family.

The protein resides in the plastid. It localises to the chloroplast. This is Uracil phosphoribosyltransferase homolog from Pyropia yezoensis (Susabi-nori).